The chain runs to 326 residues: Protein farnesyltransferase/geranylgeranyltransferase type-1 subunit alpha (326 aa).

5 PFTA repeats span residues 55–89 (RSPR…ALNH), 90–124 (DLFE…KLGP), 126–160 (VAGR…ALGG), 161–194 (WEDE…QSPL), and 201–235 (MRES…DDKE).

This sequence belongs to the protein prenyltransferase subunit alpha family. As to quaternary structure, heterodimer of an alpha and a beta subunit. Mg(2+) is required as a cofactor.

It carries out the reaction L-cysteinyl-[protein] + (2E,6E)-farnesyl diphosphate = S-(2E,6E)-farnesyl-L-cysteinyl-[protein] + diphosphate. It catalyses the reaction geranylgeranyl diphosphate + L-cysteinyl-[protein] = S-geranylgeranyl-L-cysteinyl-[protein] + diphosphate. In terms of biological role, essential subunit of both the farnesyltransferase and the geranylgeranyltransferase complex. Contributes to the transfer of a farnesyl or geranylgeranyl moiety from farnesyl or geranylgeranyl diphosphate to a cysteine at the fourth position from the C-terminus of several proteins having the C-terminal sequence Cys-aliphatic-aliphatic-X. In Arabidopsis thaliana (Mouse-ear cress), this protein is Protein farnesyltransferase/geranylgeranyltransferase type-1 subunit alpha (FTA).